Reading from the N-terminus, the 264-residue chain is S-adenosylmethionine decarboxylase proenzyme (264 aa).

Catalysis depends on serine 113, which acts as the Schiff-base intermediate with substrate; via pyruvic acid. At serine 113 the chain carries Pyruvic acid (Ser); by autocatalysis. Catalysis depends on histidine 118, which acts as the Proton acceptor; for processing activity. The active-site Proton donor; for catalytic activity is cysteine 141.

It belongs to the prokaryotic AdoMetDC family. Type 2 subfamily. As to quaternary structure, heterooctamer of four alpha and four beta chains arranged as a tetramer of alpha/beta heterodimers. It depends on pyruvate as a cofactor. Is synthesized initially as an inactive proenzyme. Formation of the active enzyme involves a self-maturation process in which the active site pyruvoyl group is generated from an internal serine residue via an autocatalytic post-translational modification. Two non-identical subunits are generated from the proenzyme in this reaction, and the pyruvate is formed at the N-terminus of the alpha chain, which is derived from the carboxyl end of the proenzyme. The post-translation cleavage follows an unusual pathway, termed non-hydrolytic serinolysis, in which the side chain hydroxyl group of the serine supplies its oxygen atom to form the C-terminus of the beta chain, while the remainder of the serine residue undergoes an oxidative deamination to produce ammonia and the pyruvoyl group blocking the N-terminus of the alpha chain.

It catalyses the reaction S-adenosyl-L-methionine + H(+) = S-adenosyl 3-(methylsulfanyl)propylamine + CO2. The protein operates within amine and polyamine biosynthesis; S-adenosylmethioninamine biosynthesis; S-adenosylmethioninamine from S-adenosyl-L-methionine: step 1/1. Catalyzes the decarboxylation of S-adenosylmethionine to S-adenosylmethioninamine (dcAdoMet), the propylamine donor required for the synthesis of the polyamines spermine and spermidine from the diamine putrescine. This is S-adenosylmethionine decarboxylase proenzyme from Pseudomonas paraeruginosa (strain DSM 24068 / PA7) (Pseudomonas aeruginosa (strain PA7)).